The following is a 194-amino-acid chain: Peptidyl-tRNA hydrolase (194 aa).

Tyrosine 17 lines the tRNA pocket. Histidine 22 functions as the Proton acceptor in the catalytic mechanism. 3 residues coordinate tRNA: tyrosine 68, asparagine 70, and asparagine 116.

Belongs to the PTH family. Monomer.

The protein localises to the cytoplasm. It carries out the reaction an N-acyl-L-alpha-aminoacyl-tRNA + H2O = an N-acyl-L-amino acid + a tRNA + H(+). Hydrolyzes ribosome-free peptidyl-tRNAs (with 1 or more amino acids incorporated), which drop off the ribosome during protein synthesis, or as a result of ribosome stalling. Functionally, catalyzes the release of premature peptidyl moieties from peptidyl-tRNA molecules trapped in stalled 50S ribosomal subunits, and thus maintains levels of free tRNAs and 50S ribosomes. The chain is Peptidyl-tRNA hydrolase from Pseudomonas syringae pv. syringae (strain B728a).